The chain runs to 348 residues: Glucan endo-1,3-beta-glucosidase, basic isoform (348 aa).

Gln-1 bears the Pyrrolidone carboxylic acid mark. The active-site Proton donor is Glu-95. The Nucleophile role is filled by Glu-240. Positions 317–348 (AQRMQRLLLMSSMQHIPLRVTCKLEPSSQSLL) are cleaved as a propeptide — removed in mature form.

It belongs to the glycosyl hydrolase 17 family.

Its subcellular location is the vacuole. The enzyme catalyses Hydrolysis of (1-&gt;3)-beta-D-glucosidic linkages in (1-&gt;3)-beta-D-glucans.. Its function is as follows. Implicated in the defense of plants against pathogens. This is Glucan endo-1,3-beta-glucosidase, basic isoform from Phaseolus vulgaris (Kidney bean).